A 420-amino-acid chain; its full sequence is Gamma-glutamyl phosphate reductase (420 aa).

The protein belongs to the gamma-glutamyl phosphate reductase family.

The protein resides in the cytoplasm. The enzyme catalyses L-glutamate 5-semialdehyde + phosphate + NADP(+) = L-glutamyl 5-phosphate + NADPH + H(+). It functions in the pathway amino-acid biosynthesis; L-proline biosynthesis; L-glutamate 5-semialdehyde from L-glutamate: step 2/2. Its function is as follows. Catalyzes the NADPH-dependent reduction of L-glutamate 5-phosphate into L-glutamate 5-semialdehyde and phosphate. The product spontaneously undergoes cyclization to form 1-pyrroline-5-carboxylate. This Neisseria meningitidis serogroup C / serotype 2a (strain ATCC 700532 / DSM 15464 / FAM18) protein is Gamma-glutamyl phosphate reductase.